Here is a 77-residue protein sequence, read N- to C-terminus: Translation initiation factor IF-1, chloroplastic (77 aa).

Residues 1 to 71 (MKEQKWIHEG…TRGRIIYRLR (71 aa)) form the S1-like domain.

The protein belongs to the IF-1 family. As to quaternary structure, component of the 30S ribosomal translation pre-initiation complex which assembles on the 30S ribosome in the order IF-2 and IF-3, IF-1 and N-formylmethionyl-tRNA(fMet); mRNA recruitment can occur at any time during PIC assembly.

It is found in the plastid. The protein localises to the chloroplast. Its function is as follows. One of the essential components for the initiation of protein synthesis. Stabilizes the binding of IF-2 and IF-3 on the 30S subunit to which N-formylmethionyl-tRNA(fMet) subsequently binds. Helps modulate mRNA selection, yielding the 30S pre-initiation complex (PIC). Upon addition of the 50S ribosomal subunit IF-1, IF-2 and IF-3 are released leaving the mature 70S translation initiation complex. This chain is Translation initiation factor IF-1, chloroplastic, found in Montinia caryophyllacea (Wild clove bush).